The chain runs to 541 residues: MCCSERLLGLPQPVEMEAPDEAEGLPSKQKEMPPPPPPSPPSEPAQKLPPQGAGSHSLTVRSSLCLFAASQFLLACGVLWLSGHGHSWLQNTTDLISSSLTVLNHLGPVAWLGSGTWGIPSLLLVSLTVSLVIVTTLVWHLLKAPPEPPAPLPPEDRRQSVSRQPSFTYSEWMEEKVEDDFLDLDAVPETPVFDCVMDIKPETDPASLTVKSMGLQERRGSNVSLTLDMCTPGCNEEGFGYLVSPREESAHEYLLSASRVLRAEELHEKALDPFLLQAEFFEIPMNFVDPKEYDIPGLVRKNRYKTILPNPHSRVRLTSPDPEDPLSSYINANYIRGYSGEEKVYIATQGPIVSTVADFWRMVWQERTPIIVMITNIEEMNEKCTEYWPEEQVVHDGVEITVQKVIHTEDYRLRLISLRRGTEERSLKHYWFTSWPDQKTPDRAPPLLHLVREVEEAAQQEGPHCSPIIVHCSAGIGRTGCFIATSICCQQLRREGVVDILKTTCQLRQDRGGMIQTCEQYQFVHHAMSLYEKQLSLQSSE.

The disordered stretch occupies residues 1 to 55 (MCCSERLLGLPQPVEMEAPDEAEGLPSKQKEMPPPPPPSPPSEPAQKLPPQGAGS). Pro residues predominate over residues 32–43 (MPPPPPPSPPSE). The next 2 helical transmembrane spans lie at 64–84 (LCLFAASQFLLACGVLWLSGH) and 122–142 (LLLVSLTVSLVIVTTLVWHLL). The residue at position 221 (S221) is a Phosphoserine; by PKA. T231 is subject to Phosphothreonine; by MAPK. Phosphoserine; by MAPK is present on S244. In terms of domain architecture, Tyrosine-protein phosphatase spans 276–531 (LQAEFFEIPM…QFVHHAMSLY (256 aa)). Substrate-binding positions include D437, 472 to 478 (CSAGIGR), and Q516. Residue C472 is the Phosphocysteine intermediate of the active site.

This sequence belongs to the protein-tyrosine phosphatase family. Non-receptor class subfamily. In terms of processing, phosphorylation at Ser-221 by PKA deactivates PTPN5. Phosphorylation at Thr-231 and Ser-244 by MAPKs stabilizes the phosphatase, dephosphorylation of these sites results in ubiquitin-mediated degradation of the active phosphatase. In terms of tissue distribution, STEP20 is expressed only in the CNS.

Its subcellular location is the endoplasmic reticulum membrane. It is found in the cytoplasm. The catalysed reaction is O-phospho-L-tyrosyl-[protein] + H2O = L-tyrosyl-[protein] + phosphate. Its function is as follows. May regulate the activity of several effector molecules involved in synaptic plasticity and neuronal cell survival, including MAPKs, Src family kinases and NMDA receptors. The sequence is that of Tyrosine-protein phosphatase non-receptor type 5 (Ptpn5) from Mus musculus (Mouse).